A 93-amino-acid polypeptide reads, in one-letter code: UPF0223 protein SAG0995 (93 aa).

The protein belongs to the UPF0223 family.

This is UPF0223 protein SAG0995 from Streptococcus agalactiae serotype V (strain ATCC BAA-611 / 2603 V/R).